The chain runs to 126 residues: Lymphocyte antigen 6 complex locus protein G6c (126 aa).

Positions 1–19 (MKHLLLLTLSALLYCWVSA) are cleaved as a signal peptide. In terms of domain architecture, UPAR/Ly6 spans 21–112 (TRCHSCYKVP…PRPTPALALI (92 aa)). 3 cysteine pairs are disulfide-bonded: cysteine 23–cysteine 48, cysteine 26–cysteine 34, and cysteine 40–cysteine 66. A glycan (N-linked (GlcNAc...) (high mannose) asparagine) is linked at asparagine 89. Cysteine 93 and cysteine 98 are disulfide-bonded. Serine 100 carries GPI-anchor amidated serine lipidation. Positions 101 to 126 (PAPRPTPALALISLTSLAGLGLWLLH) are cleaved as a propeptide — removed in mature form.

In terms of assembly, monomer. In terms of processing, N-glycosylated. Highly expressed at the leading edges of cells, on filopodia.

It localises to the cell membrane. This chain is Lymphocyte antigen 6 complex locus protein G6c (Ly6g6c), found in Mus musculus (Mouse).